We begin with the raw amino-acid sequence, 468 residues long: Putative magnesium transporter MRS2-G (468 aa).

2 disordered regions span residues 1–76 and 183–204; these read MGRR…AGKV and GQPGGDDHGEKHDDSHGDQVPR. Low complexity-rich tracts occupy residues 14-23 and 31-45; these read ASNASTSSST and RLPSLTRPRASSSPS. Residues 46–67 show a composition bias toward pro residues; it reads PASPSPPPPSASHPAPPSPPLA. The span at 187–201 shows a compositional bias: basic and acidic residues; that stretch reads GDDHGEKHDDSHGDQ. 2 helical membrane-spanning segments follow: residues 402–422 and 437–457; these read LTLTIASFGIAVNTFIAGAFA and FFWPFVGGTSSGCFMICIVLL.

The protein belongs to the CorA metal ion transporter (MIT) (TC 1.A.35.5) family. As to quaternary structure, interacts with CYCB2-2.

It is found in the membrane. Functionally, putative magnesium transporter. The protein is Putative magnesium transporter MRS2-G (MRS2-G) of Oryza sativa subsp. japonica (Rice).